The sequence spans 370 residues: tRNA N6-adenosine threonylcarbamoyltransferase (370 aa).

The Fe cation site is built by histidine 122 and histidine 126. Substrate-binding positions include 153–157 (LLSGG), aspartate 186, glycine 199, and asparagine 298. Aspartate 326 serves as a coordination point for Fe cation.

This sequence belongs to the KAE1 / TsaD family. Fe(2+) serves as cofactor.

Its subcellular location is the cytoplasm. It carries out the reaction L-threonylcarbamoyladenylate + adenosine(37) in tRNA = N(6)-L-threonylcarbamoyladenosine(37) in tRNA + AMP + H(+). Required for the formation of a threonylcarbamoyl group on adenosine at position 37 (t(6)A37) in tRNAs that read codons beginning with adenine. Is involved in the transfer of the threonylcarbamoyl moiety of threonylcarbamoyl-AMP (TC-AMP) to the N6 group of A37, together with TsaE and TsaB. TsaD likely plays a direct catalytic role in this reaction. This Granulibacter bethesdensis (strain ATCC BAA-1260 / CGDNIH1) protein is tRNA N6-adenosine threonylcarbamoyltransferase.